Reading from the N-terminus, the 191-residue chain is Thymidylate kinase (191 aa).

7 to 14 (GVDGAGKS) contacts ATP.

Belongs to the thymidylate kinase family.

It carries out the reaction dTMP + ATP = dTDP + ADP. In terms of biological role, phosphorylation of dTMP to form dTDP in both de novo and salvage pathways of dTTP synthesis. The chain is Thymidylate kinase (tmk) from Helicobacter pylori (strain ATCC 700392 / 26695) (Campylobacter pylori).